The chain runs to 244 residues: Phosphoadenosine 5'-phosphosulfate reductase (244 aa).

Residue C239 is the Nucleophile; cysteine thiosulfonate intermediate of the active site.

The protein belongs to the PAPS reductase family. CysH subfamily.

The protein localises to the cytoplasm. It carries out the reaction [thioredoxin]-disulfide + sulfite + adenosine 3',5'-bisphosphate + 2 H(+) = [thioredoxin]-dithiol + 3'-phosphoadenylyl sulfate. The protein operates within sulfur metabolism; hydrogen sulfide biosynthesis; sulfite from sulfate: step 3/3. Functionally, catalyzes the formation of sulfite from phosphoadenosine 5'-phosphosulfate (PAPS) using thioredoxin as an electron donor. This is Phosphoadenosine 5'-phosphosulfate reductase from Shigella dysenteriae serotype 1 (strain Sd197).